Here is a 102-residue protein sequence, read N- to C-terminus: Putative nuclear receptor corepressor 1-like protein NCOR1P1 (102 aa).

Positions 1–18 (MSSSGYPPNQGAFSTEQS) are enriched in polar residues. The disordered stretch occupies residues 1–68 (MSSSGYPPNQ…DQNASPSKLS (68 aa)). Residues 68–100 (SKEELIECMDRVDREIAKVEQQILKLKKKQVKV) are a coiled coil.

It belongs to the N-CoR nuclear receptor corepressors family.

The polypeptide is Putative nuclear receptor corepressor 1-like protein NCOR1P1 (NCOR1P1) (Homo sapiens (Human)).